The following is a 317-amino-acid chain: Adenine deaminase (317 aa).

The Zn(2+) site is built by H14, H16, and H194. Catalysis depends on E197, which acts as the Proton donor. D275 lines the Zn(2+) pocket. D276 lines the substrate pocket.

Belongs to the metallo-dependent hydrolases superfamily. Adenosine and AMP deaminases family. Adenine deaminase type 2 subfamily. The cofactor is Zn(2+).

It catalyses the reaction adenine + H2O + H(+) = hypoxanthine + NH4(+). Its function is as follows. Catalyzes the hydrolytic deamination of adenine to hypoxanthine. Plays an important role in the purine salvage pathway and in nitrogen catabolism. The polypeptide is Adenine deaminase (Pseudomonas fluorescens (strain Pf0-1)).